The chain runs to 112 residues: Notch-regulated ankyrin repeat-containing protein A (112 aa).

2 ANK repeats span residues 48–77 (EGQT…DIRL) and 81–110 (EGWS…YSSG).

Belongs to the NRARP family.

Functionally, regulates independently canonical Wnt and Notch signaling by modulating LEF1 and Notch protein turnover. Stabilizes LEF1, a pivotal transcription factor in the Wnt signaling cascade, by blocking its ubiquitination. Involved in angiogenesis; involved in intersegmental vessel patterning during development. This is Notch-regulated ankyrin repeat-containing protein A (nrarpa) from Danio rerio (Zebrafish).